A 757-amino-acid chain; its full sequence is Lysyl oxidase homolog 4 (757 aa).

The N-terminal stretch at 1–25 is a signal peptide; it reads MWFLPAALPLLPLLLLLGQAPPSRP. 4 consecutive SRCR domains span residues 33–134, 160–288, 312–412, and 422–530; these read LRLV…VVCN, VRLK…VSCV, VRLR…VRCN, and VRLA…VSCT. 17 disulfides stabilise this stretch: C59–C123, C72–C133, C103–C113, C192–C277, C205–C287, C252–C262, C337–C401, C350–C411, C381–C391, C451–C516, C464–C529, C498–C508, C559–C565, C611–C659, C643–C649, C671–C681, and C718–C732. N199 is a glycosylation site (N-linked (GlcNAc...) asparagine). A lysyl-oxidase like region spans residues 534-737; the sequence is PDLVMNAQLV…WLHNCHTGDS (204 aa). Cu cation is bound by residues H612, H614, and H616. A glycan (N-linked (GlcNAc...) asparagine) is linked at N630. A cross-link (lysine tyrosylquinone (Lys-Tyr)) is located at residues 639–675; the sequence is KASFCLEDTNCPTGMQRRYACANFGEQGVTVGCWDTY. Y675 is modified (2',4',5'-topaquinone).

It belongs to the lysyl oxidase family. Requires Cu cation as cofactor. Lysine tyrosylquinone residue is required as a cofactor. Post-translationally, the lysine tyrosylquinone cross-link (LTQ) is generated by condensation of the epsilon-amino group of a lysine with a topaquinone produced by oxidation of tyrosine. In terms of processing, may be proteolytically cleaved by BMP1.

It localises to the secreted. Its subcellular location is the extracellular space. It carries out the reaction L-lysyl-[protein] + O2 + H2O = (S)-2-amino-6-oxohexanoyl-[protein] + H2O2 + NH4(+). Its function is as follows. Catalyzes the oxidative deamination of lysine and hydroxylysine residues in collagen and elastin, resulting in the formation of covalent cross-linkages, and the stabilization of collagen and elastin fibers. This Bos taurus (Bovine) protein is Lysyl oxidase homolog 4 (LOXL4).